A 590-amino-acid chain; its full sequence is Protein OS-9 homolog (590 aa).

An N-terminal signal peptide occupies residues 1-19; that stretch reads MRRPSLALLALSSLPFGSA. Residues 83 to 106 are disordered; that stretch reads SAIRESATANADTDNGDESIGGTS. Asn136 is a glycosylation site (N-linked (GlcNAc...) asparagine). In terms of domain architecture, MRH spans 167 to 312; sequence NQCLHFVSGW…VIHTPRLCAD (146 aa). Cysteines 169 and 182 form a disulfide. The a mannooligosaccharide derivative site is built by Trp176, Trp177, and Gln189. The segment at 198–248 is disordered; that stretch reads GGPPLRDKNSQEYILGTSLPPSSHSQKGKQIEVPNNEQKQLSPPPNTELQA. 2 disulfides stabilise this stretch: Cys265-Cys298 and Cys280-Cys310. A mannooligosaccharide derivative contacts are provided by Asp266, Arg272, Glu294, and Tyr300. Disordered stretches follow at residues 357 to 376, 436 to 472, and 545 to 590; these read AAVTTEDQKQGSESGSPEKL, GDDNNNNNNNHHPKAGKGRKAAGAGKGQSGQKEMKKM, and YEDE…RDEL. The segment covering 446–455 has biased composition (basic residues); it reads HHPKAGKGRK. 2 stretches are compositionally biased toward basic and acidic residues: residues 556-568 and 579-590; these read EAGKDQKESKKGG and EGSKEEYYRDEL. A Prevents secretion from ER motif is present at residues 587 to 590; the sequence is RDEL.

The protein belongs to the OS-9 family. In terms of assembly, interacts with missfolded ER lumenal proteins.

The protein localises to the endoplasmic reticulum membrane. Its function is as follows. Lectin involved in the quality control of the secretory pathway. As a member of the endoplasmic reticulum-associated degradation lumenal (ERAD-L) surveillance system, targets misfolded endoplasmic reticulum lumenal glycoproteins for degradation. The chain is Protein OS-9 homolog (yos-9) from Neurospora crassa (strain ATCC 24698 / 74-OR23-1A / CBS 708.71 / DSM 1257 / FGSC 987).